A 641-amino-acid chain; its full sequence is 1-deoxy-D-xylulose-5-phosphate synthase (641 aa).

Residues His-79 and 120–122 (GHS) contribute to the thiamine diphosphate site. Asp-151 lines the Mg(2+) pocket. Residues 152–153 (GS), Asn-180, Tyr-291, and Glu-375 contribute to the thiamine diphosphate site. Residue Asn-180 participates in Mg(2+) binding.

The protein belongs to the transketolase family. DXPS subfamily. In terms of assembly, homodimer. Mg(2+) serves as cofactor. The cofactor is thiamine diphosphate.

It carries out the reaction D-glyceraldehyde 3-phosphate + pyruvate + H(+) = 1-deoxy-D-xylulose 5-phosphate + CO2. It functions in the pathway metabolic intermediate biosynthesis; 1-deoxy-D-xylulose 5-phosphate biosynthesis; 1-deoxy-D-xylulose 5-phosphate from D-glyceraldehyde 3-phosphate and pyruvate: step 1/1. In terms of biological role, catalyzes the acyloin condensation reaction between C atoms 2 and 3 of pyruvate and glyceraldehyde 3-phosphate to yield 1-deoxy-D-xylulose-5-phosphate (DXP). This is 1-deoxy-D-xylulose-5-phosphate synthase from Nitratidesulfovibrio vulgaris (strain ATCC 29579 / DSM 644 / CCUG 34227 / NCIMB 8303 / VKM B-1760 / Hildenborough) (Desulfovibrio vulgaris).